Reading from the N-terminus, the 162-residue chain is NADH-quinone oxidoreductase subunit I (162 aa).

4Fe-4S ferredoxin-type domains are found at residues 53–83 and 93–122; these read LRRY…IEAE and TRYD…EGPN. Cys63, Cys66, Cys69, Cys73, Cys102, Cys105, Cys108, and Cys112 together coordinate [4Fe-4S] cluster.

Belongs to the complex I 23 kDa subunit family. In terms of assembly, NDH-1 is composed of 14 different subunits. Subunits NuoA, H, J, K, L, M, N constitute the membrane sector of the complex. It depends on [4Fe-4S] cluster as a cofactor.

It localises to the cell inner membrane. It carries out the reaction a quinone + NADH + 5 H(+)(in) = a quinol + NAD(+) + 4 H(+)(out). Its function is as follows. NDH-1 shuttles electrons from NADH, via FMN and iron-sulfur (Fe-S) centers, to quinones in the respiratory chain. The immediate electron acceptor for the enzyme in this species is believed to be ubiquinone. Couples the redox reaction to proton translocation (for every two electrons transferred, four hydrogen ions are translocated across the cytoplasmic membrane), and thus conserves the redox energy in a proton gradient. The polypeptide is NADH-quinone oxidoreductase subunit I (Rhodospirillum rubrum (strain ATCC 11170 / ATH 1.1.1 / DSM 467 / LMG 4362 / NCIMB 8255 / S1)).